A 236-amino-acid polypeptide reads, in one-letter code: NAD(P)H-hydrate epimerase (236 aa).

Residues 11-217 (AAALDRELMS…SIAKKYDFDV (207 aa)) enclose the YjeF N-terminal domain. Residue 61 to 65 (NNGGD) participates in (6S)-NADPHX binding. Residues N62 and D123 each contribute to the K(+) site. (6S)-NADPHX is bound by residues 127–133 (GFSFSGE) and D156. S159 is a binding site for K(+).

This sequence belongs to the NnrE/AIBP family. Requires K(+) as cofactor.

The protein resides in the cytoplasm. It localises to the mitochondrion. It carries out the reaction (6R)-NADHX = (6S)-NADHX. It catalyses the reaction (6R)-NADPHX = (6S)-NADPHX. Catalyzes the epimerization of the S- and R-forms of NAD(P)HX, a damaged form of NAD(P)H that is a result of enzymatic or heat-dependent hydration. This is a prerequisite for the S-specific NAD(P)H-hydrate dehydratase to allow the repair of both epimers of NAD(P)HX. The protein is NAD(P)H-hydrate epimerase of Neurospora crassa (strain ATCC 24698 / 74-OR23-1A / CBS 708.71 / DSM 1257 / FGSC 987).